The primary structure comprises 143 residues: 6,7-dimethyl-8-ribityllumazine synthase (143 aa).

5-amino-6-(D-ribitylamino)uracil is bound by residues Trp10, 44–46 (SFE), and 68–70 (CVI). 73–74 (DT) is a (2S)-2-hydroxy-3-oxobutyl phosphate binding site. His76 serves as the catalytic Proton donor. Tyr101 contributes to the 5-amino-6-(D-ribitylamino)uracil binding site. Arg115 contacts (2S)-2-hydroxy-3-oxobutyl phosphate.

Belongs to the DMRL synthase family.

The catalysed reaction is (2S)-2-hydroxy-3-oxobutyl phosphate + 5-amino-6-(D-ribitylamino)uracil = 6,7-dimethyl-8-(1-D-ribityl)lumazine + phosphate + 2 H2O + H(+). It participates in cofactor biosynthesis; riboflavin biosynthesis; riboflavin from 2-hydroxy-3-oxobutyl phosphate and 5-amino-6-(D-ribitylamino)uracil: step 1/2. Catalyzes the formation of 6,7-dimethyl-8-ribityllumazine by condensation of 5-amino-6-(D-ribitylamino)uracil with 3,4-dihydroxy-2-butanone 4-phosphate. This is the penultimate step in the biosynthesis of riboflavin. The sequence is that of 6,7-dimethyl-8-ribityllumazine synthase from Bacteroides fragilis (strain YCH46).